The primary structure comprises 198 residues: Recombination protein RecR (198 aa).

A C4-type zinc finger spans residues 56-71; that stretch reads CGVCGNVDTSNPCGIC. Residues 79–174 enclose the Toprim domain; the sequence is RSICVVEEVA…RVTQLAHGLP (96 aa).

This sequence belongs to the RecR family.

In terms of biological role, may play a role in DNA repair. It seems to be involved in an RecBC-independent recombinational process of DNA repair. It may act with RecF and RecO. The sequence is that of Recombination protein RecR from Novosphingobium aromaticivorans (strain ATCC 700278 / DSM 12444 / CCUG 56034 / CIP 105152 / NBRC 16084 / F199).